We begin with the raw amino-acid sequence, 97 residues long: U-scoloptoxin(10)-Sa2a (97 aa).

An N-terminal signal peptide occupies residues Met1–Ala23.

It belongs to the scoloptoxin-10 family. Post-translationally, contains 3 disulfide bonds. Expressed by the venom gland.

Its subcellular location is the secreted. In Scolopendra alternans (Florida Keys giant centipede), this protein is U-scoloptoxin(10)-Sa2a.